The sequence spans 296 residues: Formamidopyrimidine-DNA glycosylase (296 aa).

Pro-2 serves as the catalytic Schiff-base intermediate with DNA. Glu-3 serves as the catalytic Proton donor. Residue Lys-58 is the Proton donor; for beta-elimination activity of the active site. His-104, Arg-126, and Lys-169 together coordinate DNA. The segment at 260-296 (SVYDRESQACRTPGCGGTVARIVQAGRSTFYCATCQK) adopts an FPG-type zinc-finger fold. Arg-286 serves as the catalytic Proton donor; for delta-elimination activity.

Belongs to the FPG family. In terms of assembly, monomer. Requires Zn(2+) as cofactor.

The catalysed reaction is Hydrolysis of DNA containing ring-opened 7-methylguanine residues, releasing 2,6-diamino-4-hydroxy-5-(N-methyl)formamidopyrimidine.. The enzyme catalyses 2'-deoxyribonucleotide-(2'-deoxyribose 5'-phosphate)-2'-deoxyribonucleotide-DNA = a 3'-end 2'-deoxyribonucleotide-(2,3-dehydro-2,3-deoxyribose 5'-phosphate)-DNA + a 5'-end 5'-phospho-2'-deoxyribonucleoside-DNA + H(+). In terms of biological role, involved in base excision repair of DNA damaged by oxidation or by mutagenic agents. Acts as a DNA glycosylase that recognizes and removes damaged bases. Has a preference for oxidized purines, such as 7,8-dihydro-8-oxoguanine (8-oxoG). Has AP (apurinic/apyrimidinic) lyase activity and introduces nicks in the DNA strand. Cleaves the DNA backbone by beta-delta elimination to generate a single-strand break at the site of the removed base with both 3'- and 5'-phosphates. This is Formamidopyrimidine-DNA glycosylase from Rhizobium johnstonii (strain DSM 114642 / LMG 32736 / 3841) (Rhizobium leguminosarum bv. viciae).